A 457-amino-acid chain; its full sequence is Cell division protein FtsZ (457 aa).

Residues 26–30, 115–117, Glu-146, Lys-150, and Asp-193 each bind GTP; these read GGGGN and GTG. Residues 429–447 are compositionally biased toward basic and acidic residues; that stretch reads KKDVVRSEESERPAFESER. A disordered region spans residues 429–457; that stretch reads KKDVVRSEESERPAFESERSSSPTTISFN. Residues 448-457 are compositionally biased toward polar residues; sequence SSSPTTISFN.

Belongs to the FtsZ family. As to quaternary structure, homodimer. Polymerizes to form a dynamic ring structure in a strictly GTP-dependent manner. Interacts directly with several other division proteins.

Its subcellular location is the cytoplasm. In terms of biological role, essential cell division protein that forms a contractile ring structure (Z ring) at the future cell division site. The regulation of the ring assembly controls the timing and the location of cell division. One of the functions of the FtsZ ring is to recruit other cell division proteins to the septum to produce a new cell wall between the dividing cells. Binds GTP and shows GTPase activity. This Porphyromonas gingivalis (strain ATCC BAA-308 / W83) protein is Cell division protein FtsZ.